We begin with the raw amino-acid sequence, 344 residues long: Heat-inducible transcription repressor HrcA (344 aa).

It belongs to the HrcA family.

Its function is as follows. Negative regulator of class I heat shock genes (grpE-dnaK-dnaJ and groELS operons). Prevents heat-shock induction of these operons. In Streptococcus equi subsp. equi (strain 4047), this protein is Heat-inducible transcription repressor HrcA.